We begin with the raw amino-acid sequence, 418 residues long: Gamma-glutamyl phosphate reductase (418 aa).

The protein belongs to the gamma-glutamyl phosphate reductase family.

It is found in the cytoplasm. It carries out the reaction L-glutamate 5-semialdehyde + phosphate + NADP(+) = L-glutamyl 5-phosphate + NADPH + H(+). It participates in amino-acid biosynthesis; L-proline biosynthesis; L-glutamate 5-semialdehyde from L-glutamate: step 2/2. Functionally, catalyzes the NADPH-dependent reduction of L-glutamate 5-phosphate into L-glutamate 5-semialdehyde and phosphate. The product spontaneously undergoes cyclization to form 1-pyrroline-5-carboxylate. This Citrifermentans bemidjiense (strain ATCC BAA-1014 / DSM 16622 / JCM 12645 / Bem) (Geobacter bemidjiensis) protein is Gamma-glutamyl phosphate reductase.